The primary structure comprises 185 residues: UPF0397 protein AYWB_013 (185 aa).

5 helical membrane-spanning segments follow: residues Ile13–Phe33, Ala42–Ile62, Phe69–Ile89, Ile109–Pro129, and Phe148–Ile168.

It belongs to the UPF0397 family.

The protein resides in the cell membrane. This chain is UPF0397 protein AYWB_013, found in Aster yellows witches'-broom phytoplasma (strain AYWB).